Consider the following 214-residue polypeptide: Small ribosomal subunit protein uS4c (214 aa).

Basic residues-rich tracts occupy residues 1–14 and 36–46; these read MSRY…KIKR and LSRPKPKKKSQ. The tract at residues 1–46 is disordered; it reads MSRYRGPRVKKIKRLGSLPGLTTKKPPIVVRDPRKLSRPKPKKKSQ. The S4 RNA-binding domain maps to 92–153; that stretch reads MRLDNTLFRL…KEKSKALIQN (62 aa).

The protein belongs to the universal ribosomal protein uS4 family. In terms of assembly, part of the 30S ribosomal subunit. Contacts protein S5. The interaction surface between S4 and S5 is involved in control of translational fidelity.

The protein resides in the plastid. Its subcellular location is the chloroplast. Its function is as follows. One of the primary rRNA binding proteins, it binds directly to 16S rRNA where it nucleates assembly of the body of the 30S subunit. In terms of biological role, with S5 and S12 plays an important role in translational accuracy. The chain is Small ribosomal subunit protein uS4c (rps4) from Pelargonium hortorum (Common geranium).